Consider the following 415-residue polypeptide: Serine--tRNA ligase (415 aa).

231–233 (TAE) provides a ligand contact to L-serine. 262 to 264 (RSE) serves as a coordination point for ATP. Residue Glu-285 coordinates L-serine. 349–352 (EISS) serves as a coordination point for ATP. Ser-383 contributes to the L-serine binding site.

It belongs to the class-II aminoacyl-tRNA synthetase family. Type-1 seryl-tRNA synthetase subfamily. In terms of assembly, homodimer. The tRNA molecule binds across the dimer.

It localises to the cytoplasm. The catalysed reaction is tRNA(Ser) + L-serine + ATP = L-seryl-tRNA(Ser) + AMP + diphosphate + H(+). It catalyses the reaction tRNA(Sec) + L-serine + ATP = L-seryl-tRNA(Sec) + AMP + diphosphate + H(+). Its pathway is aminoacyl-tRNA biosynthesis; selenocysteinyl-tRNA(Sec) biosynthesis; L-seryl-tRNA(Sec) from L-serine and tRNA(Sec): step 1/1. Catalyzes the attachment of serine to tRNA(Ser). Is also able to aminoacylate tRNA(Sec) with serine, to form the misacylated tRNA L-seryl-tRNA(Sec), which will be further converted into selenocysteinyl-tRNA(Sec). This Helicobacter acinonychis (strain Sheeba) protein is Serine--tRNA ligase.